Reading from the N-terminus, the 707-residue chain is U-box domain-containing protein 2 (707 aa).

Residues 239 to 313 enclose the U-box domain; it reads RVPSDFRCSL…ASWCETNNVY (75 aa). 5 ARM repeats span residues 453–492, 494–534, 536–575, 577–615, and 617–656; these read TDNR…NLSI, DNNK…SLSV, EEYK…NLSI, HENK…NLAT, and REGK…QLCT.

The catalysed reaction is S-ubiquitinyl-[E2 ubiquitin-conjugating enzyme]-L-cysteine + [acceptor protein]-L-lysine = [E2 ubiquitin-conjugating enzyme]-L-cysteine + N(6)-ubiquitinyl-[acceptor protein]-L-lysine.. The protein operates within protein modification; protein ubiquitination. Functionally, functions as an E3 ubiquitin ligase. This is U-box domain-containing protein 2 (PUB2) from Arabidopsis thaliana (Mouse-ear cress).